The following is a 279-amino-acid chain: Ribonuclease Z (279 aa).

Zn(2+)-binding residues include His-61, His-63, Asp-65, His-66, His-153, Asp-176, and His-240. The Proton acceptor role is filled by Asp-65.

It belongs to the RNase Z family. Homodimer. The cofactor is Zn(2+).

It catalyses the reaction Endonucleolytic cleavage of RNA, removing extra 3' nucleotides from tRNA precursor, generating 3' termini of tRNAs. A 3'-hydroxy group is left at the tRNA terminus and a 5'-phosphoryl group is left at the trailer molecule.. Its function is as follows. Zinc phosphodiesterase, which displays some tRNA 3'-processing endonuclease activity. Probably involved in tRNA maturation, by removing a 3'-trailer from precursor tRNA. The protein is Ribonuclease Z of Mycobacterium marinum (strain ATCC BAA-535 / M).